Consider the following 115-residue polypeptide: Large ribosomal subunit protein bL19 (115 aa).

Belongs to the bacterial ribosomal protein bL19 family.

This protein is located at the 30S-50S ribosomal subunit interface and may play a role in the structure and function of the aminoacyl-tRNA binding site. This Koribacter versatilis (strain Ellin345) protein is Large ribosomal subunit protein bL19.